The following is a 133-amino-acid chain: ATP synthase epsilon chain, chloroplastic (133 aa).

Belongs to the ATPase epsilon chain family. In terms of assembly, F-type ATPases have 2 components, CF(1) - the catalytic core - and CF(0) - the membrane proton channel. CF(1) has five subunits: alpha(3), beta(3), gamma(1), delta(1), epsilon(1). CF(0) has three main subunits: a, b and c.

The protein resides in the plastid. It localises to the chloroplast thylakoid membrane. Its function is as follows. Produces ATP from ADP in the presence of a proton gradient across the membrane. The polypeptide is ATP synthase epsilon chain, chloroplastic (Morus indica (Mulberry)).